The primary structure comprises 443 residues: Glutamyl-tRNA reductase (443 aa).

Residues T49–R52, S109, E114–Q116, and Q120 contribute to the substrate site. C50 (nucleophile) is an active-site residue. G189 to G194 serves as a coordination point for NADP(+).

The protein belongs to the glutamyl-tRNA reductase family. In terms of assembly, homodimer.

The enzyme catalyses (S)-4-amino-5-oxopentanoate + tRNA(Glu) + NADP(+) = L-glutamyl-tRNA(Glu) + NADPH + H(+). It functions in the pathway porphyrin-containing compound metabolism; protoporphyrin-IX biosynthesis; 5-aminolevulinate from L-glutamyl-tRNA(Glu): step 1/2. Functionally, catalyzes the NADPH-dependent reduction of glutamyl-tRNA(Glu) to glutamate 1-semialdehyde (GSA). The chain is Glutamyl-tRNA reductase from Mycobacteroides abscessus (strain ATCC 19977 / DSM 44196 / CCUG 20993 / CIP 104536 / JCM 13569 / NCTC 13031 / TMC 1543 / L948) (Mycobacterium abscessus).